Here is a 247-residue protein sequence, read N- to C-terminus: Probable transcriptional regulatory protein GTNG_2524 (247 aa).

Over residues 1–14 (MAGHSKWKNIQRRK) the composition is skewed to basic residues. Residues 1–21 (MAGHSKWKNIQRRKNAQDAKR) are disordered.

Belongs to the TACO1 family.

The protein resides in the cytoplasm. This Geobacillus thermodenitrificans (strain NG80-2) protein is Probable transcriptional regulatory protein GTNG_2524.